The chain runs to 206 residues: MMQDVSSSPVSPADDSLSNSEEEPDRQQPASGKRGARKRRSSRRSAGGSAGPGGATGGGIGGGDEPGSPAQGKRGKKSAGGGGGGGAGGGGGGGGGSSSGGGSPQSYEELQTQRVMANVRERQRTQSLNEAFAALRKIIPTLPSDKLSKIQTLKLAARYIDFLYQVLQSDELDSKMASCSYVAHERLSYAFSVWRMEGAWSMSASH.

The segment covering 1 to 18 has biased composition (low complexity); that stretch reads MMQDVSSSPVSPADDSLS. Positions 1–109 are disordered; the sequence is MMQDVSSSPV…GGGSPQSYEE (109 aa). The span at 34–43 shows a compositional bias: basic residues; that stretch reads RGARKRRSSR. Gly residues-rich tracts occupy residues 48 to 65 and 78 to 103; these read GSAGPGGATGGGIGGGDE and SAGGGGGGGAGGGGGGGGGSSSGGGS. The region spanning 112–163 is the bHLH domain; it reads TQRVMANVRERQRTQSLNEAFAALRKIIPTLPSDKLSKIQTLKLAARYIDFL. A sufficient for transactivation activity region spans residues 165–195; the sequence is QVLQSDELDSKMASCSYVAHERLSYAFSVWR.

Efficient DNA binding requires dimerization with another bHLH protein. Homodimer or heterodimer with E proteins such as TCF3. ID1 binds preferentially to TCF3 but does not interact efficiently with TWIST1 so ID1 levels control the amount of TCF3 available to dimerize with TWIST1 and thus determine the type of dimer formed. In terms of tissue distribution, subset of mesodermal cells.

It localises to the nucleus. Functionally, acts as a transcriptional regulator. Inhibits myogenesis by sequestrating E proteins, inhibiting trans-activation by MEF2, and inhibiting DNA-binding by MYOD1 through physical interaction. This interaction probably involves the basic domains of both proteins. Also represses expression of pro-inflammatory cytokines such as TNFA and IL1B. Regulates cranial suture patterning and fusion. Activates transcription as a heterodimer with E proteins. Regulates gene expression differentially, depending on dimer composition. Homodimers induce expression of FGFR2 and POSTN while heterodimers repress FGFR2 and POSTN expression and induce THBS1 expression. Heterodimerization is also required for osteoblast differentiation. Represses the activity of the circadian transcriptional activator: NPAS2-BMAL1 heterodimer. This Mus musculus (Mouse) protein is Twist-related protein 1 (Twist1).